A 904-amino-acid chain; its full sequence is Alanine--tRNA ligase (904 aa).

Residues His-584, His-588, Cys-687, and His-691 each contribute to the Zn(2+) site.

The protein belongs to the class-II aminoacyl-tRNA synthetase family. It depends on Zn(2+) as a cofactor.

The protein localises to the cytoplasm. It catalyses the reaction tRNA(Ala) + L-alanine + ATP = L-alanyl-tRNA(Ala) + AMP + diphosphate. Its function is as follows. Catalyzes the attachment of alanine to tRNA(Ala) in a two-step reaction: alanine is first activated by ATP to form Ala-AMP and then transferred to the acceptor end of tRNA(Ala). Also edits incorrectly charged Ser-tRNA(Ala) and Gly-tRNA(Ala) via its editing domain. The protein is Alanine--tRNA ligase of Mycobacterium bovis (strain ATCC BAA-935 / AF2122/97).